The chain runs to 141 residues: Ribosome-binding factor A (141 aa).

It belongs to the RbfA family. Monomer. Binds 30S ribosomal subunits, but not 50S ribosomal subunits or 70S ribosomes.

The protein resides in the cytoplasm. In terms of biological role, one of several proteins that assist in the late maturation steps of the functional core of the 30S ribosomal subunit. Associates with free 30S ribosomal subunits (but not with 30S subunits that are part of 70S ribosomes or polysomes). Required for efficient processing of 16S rRNA. May interact with the 5'-terminal helix region of 16S rRNA. The protein is Ribosome-binding factor A of Maricaulis maris (strain MCS10) (Caulobacter maris).